Consider the following 220-residue polypeptide: Putative tyrosine-protein phosphatase 1 (220 aa).

The Tyrosine-protein phosphatase domain occupies 67-218; the sequence is FKVPLNAELF…LLARKHVRGQ (152 aa).

The protein belongs to the protein-tyrosine phosphatase family. Non-receptor class CDC14 subfamily.

The catalysed reaction is O-phospho-L-tyrosyl-[protein] + H2O = L-tyrosyl-[protein] + phosphate. In terms of biological role, could be inactive as the active site cysteine is modified to tryptophan. The sequence is that of Putative tyrosine-protein phosphatase 1 (PTP-1) from Orgyia pseudotsugata multicapsid polyhedrosis virus (OpMNPV).